The chain runs to 61 residues: Large ribosomal subunit protein eL24 (61 aa).

Positions 7, 10, 33, and 37 each coordinate Zn(2+). The C4-type zinc-finger motif lies at 7 to 37 (CSFCGHEIPPGTGLMYVRNDGTMLWFCSSKC).

It belongs to the eukaryotic ribosomal protein eL24 family. As to quaternary structure, part of the 50S ribosomal subunit. Forms a cluster with proteins L3 and L14. The cofactor is Zn(2+).

Binds to the 23S rRNA. The polypeptide is Large ribosomal subunit protein eL24 (Saccharolobus islandicus (strain M.16.27) (Sulfolobus islandicus)).